Consider the following 736-residue polypeptide: ABC transporter G family member 16 (736 aa).

The ABC transporter domain maps to 88 to 332; that stretch reads LDFHDLVPWR…FAGFGNPIPE (245 aa). 125–132 contributes to the ATP binding site; it reads GASGSGKS. Transmembrane regions (helical) follow at residues 410-430, 449-469, 484-504, 525-545, 569-589, 590-610, and 709-729; these read SVIN…PFWI, LLGM…TVFW, FFAF…PVFL, VLSH…AFAV, ASFW…PHVM, LGYT…GFFI, and LLIT…CLLL. The 211-residue stretch at 430–640 folds into the ABC transmembrane type-2 domain; the sequence is IEIKTLTRRS…PYEAVLQNEF (211 aa).

The protein belongs to the ABC transporter superfamily. ABCG family. Eye pigment precursor importer (TC 3.A.1.204) subfamily.

The protein resides in the membrane. The polypeptide is ABC transporter G family member 16 (ABCG16) (Arabidopsis thaliana (Mouse-ear cress)).